We begin with the raw amino-acid sequence, 182 residues long: Troponin I, fast skeletal muscle (182 aa).

G2 carries the post-translational modification N-acetylglycine. The segment at 2–48 is involved in binding TNC; sequence GDEEKRNRAITARRQHLKSVMLQIAATELEKEESRREAEKQNYLAEH. A Phosphothreonine modification is found at T12. Positions 97–117 are involved in binding TNC and actin; the sequence is NQKLFDLRGKFKRPPLRRVRM. A Phosphoserine modification is found at S118.

Belongs to the troponin I family. As to quaternary structure, binds to actin and tropomyosin.

Troponin I is the inhibitory subunit of troponin, the thin filament regulatory complex which confers calcium-sensitivity to striated muscle actomyosin ATPase activity. The protein is Troponin I, fast skeletal muscle (TNNI2) of Homo sapiens (Human).